The chain runs to 324 residues: Aldo-keto reductase family 1 member A1 (324 aa).

Serine 3 bears the Phosphoserine mark. Residues 10-19 (GQKMPLIGLG), threonine 20, and tryptophan 21 contribute to the NADP(+) site. Serine 37 is modified (phosphoserine). Residue aspartate 44 participates in NADP(+) binding. The active-site Proton donor is the tyrosine 49. Position 126 is an N6-acetyllysine; alternate (lysine 126). Lysine 126 is modified (N6-succinyllysine; alternate). The residue at position 144 (lysine 144) is an N6-succinyllysine. NADP(+)-binding residues include serine 161, asparagine 162, serine 210, leucine 212, serine 214, serine 215, lysine 262, serine 263, isoleucine 264, threonine 265, arginine 268, glutamine 271, and asparagine 272. Serine 210 carries the phosphoserine modification.

The protein belongs to the aldo/keto reductase family.

The protein localises to the cytoplasm. Its subcellular location is the cytosol. The protein resides in the apical cell membrane. The catalysed reaction is a primary alcohol + NADP(+) = an aldehyde + NADPH + H(+). The enzyme catalyses L-gulonate + NADP(+) = aldehydo-D-glucuronate + NADPH + H(+). It catalyses the reaction L-gulono-1,4-lactone + NADP(+) = D-glucurono-3,6-lactone + NADPH + H(+). It carries out the reaction allyl alcohol + NADP(+) = acrolein + NADPH + H(+). The catalysed reaction is glycerol + NADP(+) = D-glyceraldehyde + NADPH + H(+). The enzyme catalyses glycerol + NADP(+) = L-glyceraldehyde + NADPH + H(+). It catalyses the reaction hydroxyacetone + NADP(+) = methylglyoxal + NADPH + H(+). It carries out the reaction 3-deoxyfructose + NADP(+) = 3-deoxyglucosone + NADPH + H(+). The catalysed reaction is (R)-mevalonate + NADP(+) = (R)-mevaldate + NADPH + H(+). The enzyme catalyses S-nitroso-CoA + NADPH + H(+) = sulfinamide-CoA + NADP(+). It catalyses the reaction S-nitrosoglutathione + NADPH + H(+) = S-(hydroxysulfenamide)glutathione + NADP(+). In terms of biological role, catalyzes the NADPH-dependent reduction of a wide variety of carbonyl-containing compounds to their corresponding alcohols. Displays enzymatic activity towards endogenous metabolites such as aromatic and aliphatic aldehydes, ketones, monosaccharides and bile acids, with a preference for negatively charged substrates, such as glucuronate and succinic semialdehyde. Plays an important role by catalyzing the reduction of D-glucuronic acid and D-glucurono-gamma-lactone. Functions as a detoxifiying enzyme by reducing a range of toxic aldehydes. Reduces methylglyoxal and 3-deoxyglucosone, which are present at elevated levels under hyperglycemic conditions and are cytotoxic. Involved also in the detoxification of lipid-derived aldehydes like acrolein. Plays a role in the activation of procarcinogens, such as polycyclic aromatic hydrocarbon trans-dihydrodiols, and in the metabolism of various xenobiotics and drugs. Also acts as an inhibitor of protein S-nitrosylation by mediating degradation of S-nitroso-coenzyme A (S-nitroso-CoA), a cofactor required to S-nitrosylate proteins. S-nitroso-CoA reductase activity is involved in reprogramming intermediary metabolism in renal proximal tubules, notably by inhibiting protein S-nitrosylation of isoform 2 of PKM (PKM2). Also acts as a S-nitroso-glutathione reductase by catalyzing the NADPH-dependent reduction of S-nitrosoglutathione. Displays no reductase activity towards retinoids. This chain is Aldo-keto reductase family 1 member A1 (AKR1A1), found in Cricetulus griseus (Chinese hamster).